We begin with the raw amino-acid sequence, 22 residues long: Rothein 4.1 (22 aa).

This sequence belongs to the frog skin active peptide (FSAP) family. Rothein subfamily. As to expression, expressed by the skin dorsal glands.

It localises to the secreted. In terms of biological role, lacks antimicrobial activity. Does not inhibit the formation of NO by neuronal nitric oxide. This is Rothein 4.1 from Litoria rothii (Roth's tree frog).